The sequence spans 498 residues: uncharacterized protein (498 aa).

A run of 11 helical transmembrane segments spans residues 54 to 74 (LLKMDLVISPIIGFLYLMAFL), 100 to 120 (VAVSIFYVLYILVETPSVVLV), 128 to 148 (MLAFISFAWSMTVLFSGFMSS), 150 to 170 (GGLIATRLILGLLEGCLFPAL), 188 to 208 (SYLFASAGLAGAFGGLFAYAL), 221 to 241 (WIYIVEGLVSFIGVPLCLFAL), 302 to 322 (VLYGFSSFLPVIIKGLGFVGL), 326 to 346 (YMTIPVYIAGVISFLFVAWLS), 353 to 373 (AVYLISASTVVAVGYIIMLAS), 381 to 401 (TATYIIAIGCYIGPGLNLGWL), and 446 to 466 (AFTLGCVIVGGLAYVVMFFSL).

It belongs to the major facilitator superfamily. Allantoate permease family.

The protein localises to the membrane. This is an uncharacterized protein from Schizosaccharomyces pombe (strain 972 / ATCC 24843) (Fission yeast).